A 390-amino-acid polypeptide reads, in one-letter code: uncharacterized protein (390 aa).

11 helical membrane passes run 10–30, 43–63, 81–101, 134–154, 162–182, 213–233, 246–266, 272–292, 298–318, 341–361, and 363–383; these read LSFCVIFLLRMLGMFMILPIL, FLIGLSMGIYGISQVIFQIPF, FMFFIGNIISASIHSIWGLII, AIGVSFAISFLIAVVSGPIIV, IFWISAFLSIVCMIIVCFFVP, FYLGVFFLHFLLMIKFTMIPN, WKVYLGTILISFFVLFLFIFY, ILENIIEICILFILFSEIIFL, LLFLIISLQIFFISFNFLEVF, TSQFLGIFFGGVFSGWLYSFL, and FSQIFYFELFIILLWLIFSFF.

It belongs to the major facilitator superfamily.

The protein resides in the cell membrane. This is an uncharacterized protein from Buchnera aphidicola subsp. Acyrthosiphon pisum (strain APS) (Acyrthosiphon pisum symbiotic bacterium).